The sequence spans 152 residues: Transcription factor XE1.1 (152 aa).

Disordered stretches follow at residues 1 to 54 (RDDF…ANNA) and 123 to 152 (KVSAVSAEPPNTHPGVHPGLTDTTNPMGHM). Composition is skewed to basic and acidic residues over residues 7–22 (DDMKSDDESSQKEMKS) and 38–54 (PEQKVEREKERRMANNA). In terms of domain architecture, bHLH spans 47 to 100 (ERRMANNARERLRVRDINEAFKELGRMCQLHLKSEKPQTKLLILHQAVAVILNL). The segment at 102 to 125 (QQVRERNLNPKAACLKRREEEKVS) is class A specific domain. The span at 143-152 (TDTTNPMGHM) shows a compositional bias: polar residues.

As to quaternary structure, efficient DNA binding requires dimerization with another bHLH protein. Forms homo- or heterooligomers with myogenin, E12 and ITF2 proteins.

It is found in the nucleus. Its function is as follows. Transcriptional regulator. Involved in the initiation of neuronal differentiation. Activates transcription by binding to the E box-containing promoter. This chain is Transcription factor XE1.1, found in Xenopus laevis (African clawed frog).